The chain runs to 85 residues: Dynein light chain 1, cytoplasmic (85 aa).

Belongs to the dynein light chain family. Homodimer. Cytoplasmic dynein consists of two catalytic heavy chains (HCs) and a number of non-catalytic subunits which present intermediate chains (ICs), light intermediate chains (LICs) and light chains (LCs). Component of the nuclear pore complex (NPC). NPC constitutes the exclusive means of nucleocytoplasmic transport. NPCs allow the passive diffusion of ions and small molecules and the active, nuclear transport receptor-mediated bidirectional transport of macromolecules such as proteins, RNAs, ribonucleoparticles (RNPs), and ribosomal subunits across the nuclear envelope. Due to its 8-fold rotational symmetry, all subunits are present with 8 copies or multiples thereof.

The protein resides in the cytoplasm. It is found in the cytoskeleton. It localises to the nucleus. The protein localises to the nuclear pore complex. Functionally, acts as one of several non-catalytic accessory components of the cytoplasmic dynein complex that are thought to be involved in linking dynein to cargos and to adapter proteins that regulate dynein function. Cytoplasmic dynein 1 acts as a motor for the intracellular retrograde motility of vesicles and organelles along microtubules. May play a role in changing or maintaining the spatial distribution of cytoskeletal structures. Also a component of the nuclear pore complex. This chain is Dynein light chain 1, cytoplasmic (dlc2), found in Schizosaccharomyces pombe (strain 972 / ATCC 24843) (Fission yeast).